Reading from the N-terminus, the 256-residue chain is Thiazole synthase (256 aa).

The active-site Schiff-base intermediate with DXP is K95. Residues G156, 182-183, and 204-205 contribute to the 1-deoxy-D-xylulose 5-phosphate site; these read AG and NT.

It belongs to the ThiG family. Homotetramer. Forms heterodimers with either ThiH or ThiS.

It is found in the cytoplasm. The enzyme catalyses [ThiS sulfur-carrier protein]-C-terminal-Gly-aminoethanethioate + 2-iminoacetate + 1-deoxy-D-xylulose 5-phosphate = [ThiS sulfur-carrier protein]-C-terminal Gly-Gly + 2-[(2R,5Z)-2-carboxy-4-methylthiazol-5(2H)-ylidene]ethyl phosphate + 2 H2O + H(+). It participates in cofactor biosynthesis; thiamine diphosphate biosynthesis. Catalyzes the rearrangement of 1-deoxy-D-xylulose 5-phosphate (DXP) to produce the thiazole phosphate moiety of thiamine. Sulfur is provided by the thiocarboxylate moiety of the carrier protein ThiS. In vitro, sulfur can be provided by H(2)S. The polypeptide is Thiazole synthase (Salmonella enteritidis PT4 (strain P125109)).